We begin with the raw amino-acid sequence, 102 residues long: NADH-quinone oxidoreductase subunit K (102 aa).

3 consecutive transmembrane segments (helical) span residues 6–26 (LGQG…GVLV), 30–50 (LLFM…AFIV), and 64–84 (FILV…LILL).

It belongs to the complex I subunit 4L family. In terms of assembly, NDH-1 is composed of 14 different subunits. Subunits NuoA, H, J, K, L, M, N constitute the membrane sector of the complex.

The protein localises to the cell inner membrane. The enzyme catalyses a quinone + NADH + 5 H(+)(in) = a quinol + NAD(+) + 4 H(+)(out). Its function is as follows. NDH-1 shuttles electrons from NADH, via FMN and iron-sulfur (Fe-S) centers, to quinones in the respiratory chain. The immediate electron acceptor for the enzyme in this species is believed to be ubiquinone. Couples the redox reaction to proton translocation (for every two electrons transferred, four hydrogen ions are translocated across the cytoplasmic membrane), and thus conserves the redox energy in a proton gradient. In Acidiphilium cryptum (strain JF-5), this protein is NADH-quinone oxidoreductase subunit K.